A 228-amino-acid polypeptide reads, in one-letter code: Probable GTP-binding protein EngB (228 aa).

The EngB-type G domain maps to 48–222; it reads YGLEVAFVGY…QFVLNNWFSS (175 aa). Residues 56 to 63, 83 to 87, 101 to 104, 168 to 171, and 201 to 203 each bind GTP; these read GYSNSGKS, GRTRL, DFPG, NKMD, and FSS. Residues serine 63 and threonine 85 each contribute to the Mg(2+) site.

The protein belongs to the TRAFAC class TrmE-Era-EngA-EngB-Septin-like GTPase superfamily. EngB GTPase family. The cofactor is Mg(2+).

In terms of biological role, necessary for normal cell division and for the maintenance of normal septation. This Buchnera aphidicola subsp. Baizongia pistaciae (strain Bp) protein is Probable GTP-binding protein EngB.